Here is a 275-residue protein sequence, read N- to C-terminus: MGQKINPHGFRLGITTDWKSRWYADKQYADYVKEDVAIRRLLSSGLERAGIADVEIERTRDRVRVDIHTARPGIVIGRRGTEADRIRADLEKLTGKQVQLNILEVKNPESQAQLVAQGVAEQLSNRVAFRRAMRKAIQSAMRQPNVKGIRVQCSGRLGGAEMSRSEFYREGRVPLHTLRADIDYGLYEAKTTFGRIGVKVWIYKGDIVGGKRELAAAVPAGADRPRRERPAGSRPRRSGASGTTATGTEAGRAVGSEEPAAAESATTPEAQSTES.

Residues 38 to 106 (IRRLLSSGLE…QVQLNILEVK (69 aa)) enclose the KH type-2 domain. Residues 217–275 (AVPAGADRPRRERPAGSRPRRSGASGTTATGTEAGRAVGSEEPAAAESATTPEAQSTES) are disordered. A compositionally biased stretch (low complexity) spans 238–275 (SGASGTTATGTEAGRAVGSEEPAAAESATTPEAQSTES).

The protein belongs to the universal ribosomal protein uS3 family. As to quaternary structure, part of the 30S ribosomal subunit. Forms a tight complex with proteins S10 and S14.

Its function is as follows. Binds the lower part of the 30S subunit head. Binds mRNA in the 70S ribosome, positioning it for translation. The chain is Small ribosomal subunit protein uS3 from Mycobacterium marinum (strain ATCC BAA-535 / M).